The primary structure comprises 243 residues: 1-(5-phosphoribosyl)-5-[(5-phosphoribosylamino)methylideneamino] imidazole-4-carboxamide isomerase (243 aa).

Residue aspartate 8 is the Proton acceptor of the active site. Aspartate 128 serves as the catalytic Proton donor.

The protein belongs to the HisA/HisF family.

The protein resides in the cytoplasm. It carries out the reaction 1-(5-phospho-beta-D-ribosyl)-5-[(5-phospho-beta-D-ribosylamino)methylideneamino]imidazole-4-carboxamide = 5-[(5-phospho-1-deoxy-D-ribulos-1-ylimino)methylamino]-1-(5-phospho-beta-D-ribosyl)imidazole-4-carboxamide. The protein operates within amino-acid biosynthesis; L-histidine biosynthesis; L-histidine from 5-phospho-alpha-D-ribose 1-diphosphate: step 4/9. The chain is 1-(5-phosphoribosyl)-5-[(5-phosphoribosylamino)methylideneamino] imidazole-4-carboxamide isomerase from Opitutus terrae (strain DSM 11246 / JCM 15787 / PB90-1).